The chain runs to 126 residues: Holo-[acyl-carrier-protein] synthase (126 aa).

The Mg(2+) site is built by aspartate 9 and glutamate 57.

Belongs to the P-Pant transferase superfamily. AcpS family. It depends on Mg(2+) as a cofactor.

The protein resides in the cytoplasm. The enzyme catalyses apo-[ACP] + CoA = holo-[ACP] + adenosine 3',5'-bisphosphate + H(+). Its function is as follows. Transfers the 4'-phosphopantetheine moiety from coenzyme A to a Ser of acyl-carrier-protein. The polypeptide is Holo-[acyl-carrier-protein] synthase (Pseudoalteromonas atlantica (strain T6c / ATCC BAA-1087)).